Reading from the N-terminus, the 300-residue chain is Acetylglutamate kinase (300 aa).

Substrate is bound by residues 68–69 (GG), Arg-90, and Asn-195.

Belongs to the acetylglutamate kinase family. ArgB subfamily.

The protein localises to the cytoplasm. It carries out the reaction N-acetyl-L-glutamate + ATP = N-acetyl-L-glutamyl 5-phosphate + ADP. The protein operates within amino-acid biosynthesis; L-arginine biosynthesis; N(2)-acetyl-L-ornithine from L-glutamate: step 2/4. Functionally, catalyzes the ATP-dependent phosphorylation of N-acetyl-L-glutamate. The chain is Acetylglutamate kinase from Halorhodospira halophila (strain DSM 244 / SL1) (Ectothiorhodospira halophila (strain DSM 244 / SL1)).